A 242-amino-acid polypeptide reads, in one-letter code: Small ribosomal subunit protein uS2 (242 aa).

This sequence belongs to the universal ribosomal protein uS2 family.

The chain is Small ribosomal subunit protein uS2 from Shewanella baltica (strain OS223).